The primary structure comprises 776 residues: Protein SEY1 (776 aa).

Residues 1–681 are Cytoplasmic-facing; that stretch reads MADRSAIQLI…KRSIITTRTH (681 aa). Residues 34–263 form the GB1/RHD3-type G domain; that stretch reads GLDYHVISVF…TENYYFKPQY (230 aa). A GTP-binding site is contributed by 44 to 51; the sequence is GSQSSGKS. A helical membrane pass occupies residues 682–702; it reads IPPWIYVLLAVLGWNEFVAVI. The Lumenal portion of the chain corresponds to 703–705; sequence RNP. Residues 706–726 traverse the membrane as a helical segment; it reads LFVTLTLILGATFFVIHKFGL. The Cytoplasmic portion of the chain corresponds to 727–776; that stretch reads WGPVVNVVQSAVGETRTAIKDKLRQFVVEDHEVKESFEMKDFSKNEQKEK.

This sequence belongs to the TRAFAC class dynamin-like GTPase superfamily. GB1/RHD3 GTPase family. RHD3 subfamily. As to quaternary structure, interacts with RTN1 and YOP1; GTP binding is not required for these interactions.

It localises to the endoplasmic reticulum membrane. Its function is as follows. Cooperates with the reticulon proteins RTN1 and RTN2 and the tubule-shaping DP1 family protein YOP1 to generate and maintain the structure of the tubular endoplasmic reticulum network. Has GTPase activity, which is required for its function in ER organization. This chain is Protein SEY1, found in Saccharomyces cerevisiae (strain RM11-1a) (Baker's yeast).